The chain runs to 114 residues: MAKTPSKKAAKAPKKAGSKRNKRVETYSSYIYKVLKQVHPDTGISKRGMSIMNSFINDIFERLAGEASRLARYNKRSTLSSREIQTAVRLMLPGELAKHAVSEGTKAVTKFTSN.

Residues 1–22 (MAKTPSKKAAKAPKKAGSKRNK) are disordered. Lys-3 is subject to N6-acetyllysine. Lys-110 participates in a covalent cross-link: Glycyl lysine isopeptide (Lys-Gly) (interchain with G-Cter in ubiquitin).

It belongs to the histone H2B family. The nucleosome is a histone octamer containing two molecules each of H2A, H2B, H3 and H4 assembled in one H3-H4 heterotetramer and two H2A-H2B heterodimers. The octamer wraps approximately 147 bp of DNA. In terms of processing, monoubiquitination of Lys-110 gives a specific tag for epigenetic transcriptional activation and is also prerequisite for histone H3 'Lys-4' and 'Lys-79' methylation.

Its subcellular location is the nucleus. The protein localises to the chromosome. Its function is as follows. Core component of nucleosome. Nucleosomes wrap and compact DNA into chromatin, limiting DNA accessibility to the cellular machineries which require DNA as a template. Histones thereby play a central role in transcription regulation, DNA repair, DNA replication and chromosomal stability. DNA accessibility is regulated via a complex set of post-translational modifications of histones, also called histone code, and nucleosome remodeling. This is Histone H2B from Olisthodiscus luteus (Marine phytoflagellate).